Here is a 484-residue protein sequence, read N- to C-terminus: Arginyl-tRNA--protein transferase 1 (484 aa).

Belongs to the R-transferase family.

The catalysed reaction is an N-terminal L-alpha-aminoacyl-[protein] + L-arginyl-tRNA(Arg) = an N-terminal L-arginyl-L-aminoacyl-[protein] + tRNA(Arg) + H(+). Involved in the post-translational conjugation of arginine to the N-terminal aspartate or glutamate of a protein. This arginylation is required for degradation of the protein via the ubiquitin pathway. Does not arginylate cysteine residues. This chain is Arginyl-tRNA--protein transferase 1 (Ate1), found in Drosophila melanogaster (Fruit fly).